Here is a 1154-residue protein sequence, read N- to C-terminus: Coiled-coil domain-containing protein 136 (1154 aa).

A disordered region spans residues M1–H48. Acidic residues predominate over residues Y14–E32. The residue at position 52 (S52) is a Phosphoserine. 2 coiled-coil regions span residues Q696–Q733 and K859–V974. The segment covering D1031–C1058 has biased composition (basic and acidic residues). Residues D1031–F1131 form a disordered region. Residues D1077–E1109 are compositionally biased toward acidic residues. The helical transmembrane segment at I1130–A1150 threads the bilayer.

Expressed in gastric tissues. Down-regulated in gastric cancer.

The protein localises to the cytoplasmic vesicle. The protein resides in the secretory vesicle. It is found in the acrosome membrane. May play a role in acrosome formation in spermatogenesis and in fertilization. This Homo sapiens (Human) protein is Coiled-coil domain-containing protein 136 (CCDC136).